The sequence spans 294 residues: Cyclin-dependent kinase A-1 (294 aa).

Positions 4 to 287 constitute a Protein kinase domain; it reads YEKVEKIGEG…ARAALEHEYF (284 aa). ATP contacts are provided by residues 10–18 and lysine 33; that span reads IGEGTYGVV. Tyrosine 15 carries the post-translational modification Phosphotyrosine. The active-site Proton acceptor is the aspartate 127. Threonine 161 is subject to Phosphothreonine.

This sequence belongs to the protein kinase superfamily. CMGC Ser/Thr protein kinase family. CDC2/CDKX subfamily. In terms of assembly, interacts with CDT1A, CYCA2-3, CYCD2-1, CYCD3-1, CYCD4-1, CYCD4-2, CYCH1-1, CYCU1-1, CYCU2-1, CYCU2-2, CYCU3-1, CYCU4-1, CYCU4-2, CYCU4-3, CKS1, KRP2/ICK2, KRP3/ICK6, KRP4/ICK7, KRP6/ICK4, KRP7/ICK5, and C-terminal domain of KRP1/ICK1. Interacts with WEE1 and TIF4A-1/EIF4A-1. Interacts with PAS2; when phosphorylated at Tyr-15. Interacts with SMR3, SMR4, SMR5, SMR6, SMR8 and At4g14310. Binds to CYCD3-2. Component of a DREAM-like complex which modulates a variety of developmentally regulated genes and of the mitotic genes in proliferating and differentiated cells. Interacts with MYB3R3 at later and with MYB3R4 at earlier stages of leaf development. May interact with SPCH. Phosphorylated at Tyr-15 by WEE1. Phosphorylation at Thr-161 is important for the kinase activity and substrate binding. Binding to the anti-phosphatase PAS2 prevents dephosphorylation. In terms of tissue distribution, expressed in roots, stems, flowers and siliques.

Its subcellular location is the cytoplasm. The protein localises to the nucleus. The catalysed reaction is L-seryl-[protein] + ATP = O-phospho-L-seryl-[protein] + ADP + H(+). It carries out the reaction L-threonyl-[protein] + ATP = O-phospho-L-threonyl-[protein] + ADP + H(+). It catalyses the reaction [DNA-directed RNA polymerase] + ATP = phospho-[DNA-directed RNA polymerase] + ADP + H(+). With respect to regulation, CDK kinase activated by CDKF-1. CDK kinase activity inhibited by KRP1/ICK1, KRP2/ICK2, KRP3/ICK6, KRP4/ICK7, KRP5/ICK3, KRP6/ICK4 and KRP7/ICK5. Down-regulated by phosphorylation by WEE1. Involved in the control of the cell cycle. Essential for both G1/S and G2/M (mitosis) phase transitions. Functions in cell morphogenesis as well as cell proliferation. Required for cell division (entry into mitosis) of the generative cell in male gametogenesis. Required to trigger guard mother cells (GMC) symmetric divisions at the late stage of stomatal development, probably via the regulation of G1 to S transition in the cell cycle. Required for the function of SPCH in entering the stomatal lineage. Promotes divisions in the guard cells (GCs) after the guard mother cells (GMC) symmetric division when in the presence of CYCD3-2 via the phosphorylation of SPCH. The protein is Cyclin-dependent kinase A-1 of Arabidopsis thaliana (Mouse-ear cress).